The following is a 589-amino-acid chain: Probable translation initiation factor IF-2 (589 aa).

One can recognise a tr-type G domain in the interval 4–225; sequence VRSPFVVVMG…AGVSQRFIPR (222 aa). The segment at 13–20 is G1; sequence GHVDVGKT. GTP is bound at residue 13-20; it reads GHVDVGKT. Positions 38-42 are G2; it reads MITQH. Residues 79 to 82 form a G3 region; it reads DTPG. Residues 79–83 and 133–136 each bind GTP; these read DTPGH and NKLD. A G4 region spans residues 133–136; sequence NKLD. The G5 stretch occupies residues 201–203; that stretch reads SAV.

This sequence belongs to the TRAFAC class translation factor GTPase superfamily. Classic translation factor GTPase family. IF-2 subfamily.

Functionally, function in general translation initiation by promoting the binding of the formylmethionine-tRNA to ribosomes. Seems to function along with eIF-2. The polypeptide is Probable translation initiation factor IF-2 (Pyrobaculum aerophilum (strain ATCC 51768 / DSM 7523 / JCM 9630 / CIP 104966 / NBRC 100827 / IM2)).